The sequence spans 399 residues: Argininosuccinate synthase (399 aa).

9–17 (AYSGGLDTS) lines the ATP pocket. Tyrosine 85 contributes to the L-citrulline binding site. Glycine 115 is an ATP binding site. Threonine 117, asparagine 121, and aspartate 122 together coordinate L-aspartate. An L-citrulline-binding site is contributed by asparagine 121. Positions 125, 173, 258, and 270 each coordinate L-citrulline.

It belongs to the argininosuccinate synthase family. Type 1 subfamily. In terms of assembly, homotetramer.

It is found in the cytoplasm. It catalyses the reaction L-citrulline + L-aspartate + ATP = 2-(N(omega)-L-arginino)succinate + AMP + diphosphate + H(+). It participates in amino-acid biosynthesis; L-arginine biosynthesis; L-arginine from L-ornithine and carbamoyl phosphate: step 2/3. The protein is Argininosuccinate synthase of Streptococcus uberis (strain ATCC BAA-854 / 0140J).